The primary structure comprises 201 residues: MKFNYPTGSKATTPKMSQAKVSMPPIYGKRGMSLEEELNESNAYYLSHGVAVIHKKPTPIQIVKVDYPKRSAAQIKEAYFSKASTTDYNGVYRGKYIDFDAKETTNSTSFPLSNFHEHQINHMKDCEKVGGICFTIIKFVKLNKIFLLKTKDLFQFWDSKENGGRKSIPLSVFEEQGYQLEYQMNPLIPYLKAVDKIIENL.

Positions 85, 87, 100, and 119 each coordinate Mg(2+).

It belongs to the RecU family. The cofactor is Mg(2+).

The protein localises to the cytoplasm. The enzyme catalyses Endonucleolytic cleavage at a junction such as a reciprocal single-stranded crossover between two homologous DNA duplexes (Holliday junction).. Its function is as follows. Endonuclease that resolves Holliday junction intermediates in genetic recombination. Cleaves mobile four-strand junctions by introducing symmetrical nicks in paired strands. Promotes annealing of linear ssDNA with homologous dsDNA. Required for DNA repair, homologous recombination and chromosome segregation. The sequence is that of Holliday junction resolvase RecU from Pediococcus pentosaceus (strain ATCC 25745 / CCUG 21536 / LMG 10740 / 183-1w).